The sequence spans 251 residues: Isopentenyl-diphosphate delta-isomerase (251 aa).

Lysine 49 lines the substrate pocket. Residues histidine 53 and histidine 66 each contribute to the Mg(2+) site. Residues 64 to 212 (LLHRAFSVFL…SNSFTPWFKL (149 aa)) form the Nudix hydrolase domain. The substrate site is built by arginine 86 and lysine 90. The active site involves cysteine 102. Serine 103 serves as a coordination point for substrate. Positions 162 and 164 each coordinate Mg(2+). Glutamate 164 is a catalytic residue.

It belongs to the IPP isomerase type 1 family. The cofactor is Mg(2+).

The protein resides in the cytoplasm. The catalysed reaction is isopentenyl diphosphate = dimethylallyl diphosphate. Its pathway is isoprenoid biosynthesis; dimethylallyl diphosphate biosynthesis; dimethylallyl diphosphate from isopentenyl diphosphate: step 1/1. Its function is as follows. Isopentenyl-diphosphate delta-isomerase; part of the second module of ergosterol biosynthesis pathway that includes the middle steps of the pathway. The second module is carried out in the vacuole and involves the formation of farnesyl diphosphate, which is also an important intermediate in the biosynthesis of ubiquinone, dolichol, heme and prenylated proteins. Activity by the mevalonate kinase first converts mevalonate into 5-phosphomevalonate. 5-phosphomevalonate is then further converted to 5-diphosphomevalonate by the phosphomevalonate kinase. The diphosphomevalonate decarboxylase then produces isopentenyl diphosphate. The isopentenyl-diphosphate delta-isomerase then catalyzes the 1,3-allylic rearrangement of the homoallylic substrate isopentenyl (IPP) to its highly electrophilic allylic isomer, dimethylallyl diphosphate (DMAPP). Finally the farnesyl diphosphate synthase catalyzes the sequential condensation of isopentenyl pyrophosphate with dimethylallyl pyrophosphate, and then with the resultant geranylpyrophosphate to the ultimate product farnesyl pyrophosphate. This chain is Isopentenyl-diphosphate delta-isomerase, found in Phaffia rhodozyma (Yeast).